The sequence spans 392 residues: GDP-mannose transporter (392 aa).

The disordered stretch occupies residues 1–40 (MANKRNEDIELGPAEGRGSTDKDPFLARRSSSQPNRPQQA). The Cytoplasmic segment spans residues 1–55 (MANKRNEDIELGPAEGRGSTDKDPFLARRSSSQPNRPQQAGPFGGYFDKIDHSPG). The span at 29–38 (RSSSQPNRPQ) shows a compositional bias: polar residues. A helical transmembrane segment spans residues 56 to 76 (ASIIAYCLSSISMTVVNKYVV). Topologically, residues 77–80 (SGSE) are lumenal. A helical transmembrane segment spans residues 81-101 (WNLNFFYLAVQSLVCTAAILI). Over 102–121 (CKQLGMFQNLAAFDSTKAKK) the chain is Cytoplasmic. A helical membrane pass occupies residues 122–144 (WFPISLLLVGMIYTSTKALQFLS). Over 145–149 (VPVYT) the chain is Lumenal. The chain crosses the membrane as a helical span at residues 150-168 (IFKNLTIIVVAYGEVLWFG). Residues 169–174 (GSVTPM) lie on the Cytoplasmic side of the membrane. The helical transmembrane segment at 175–198 (ALLSFGLMVLSSVIAAWADIQAAV) threads the bilayer. The Lumenal portion of the chain corresponds to 199–213 (EGVGHTAEATDAIST). A helical membrane pass occupies residues 214–234 (LNAGYAWMGMNVFCTAAYLLG). Topologically, residues 235–248 (MRKVIKKMNFKDYD) are cytoplasmic. Residues 249 to 269 (TMFYNNLLTIPVLIVFSLLFE) traverse the membrane as a helical segment. Topologically, residues 270–287 (DWSNDNLIKNFPVETRNS) are lumenal. Residues 288–308 (LFIGMIYSGLAAIFISYCSAW) form a helical membrane-spanning segment. Residues 309 to 316 (CIRVTSST) are Cytoplasmic-facing. The helical transmembrane segment at 317-337 (TYSMVGALNKLPLAISGLIFF) threads the bilayer. Over 338-342 (DAPVT) the chain is Lumenal. Residues 343–361 (FGSVTAIFVGFVSGLVYTW) traverse the membrane as a helical segment. At 362-392 (SKTRQKVSQILPTTQPTMSASAASNRDAANA) the chain is on the cytoplasmic side.

This sequence belongs to the TPT transporter family. SLC35D subfamily. As to quaternary structure, homooligomer.

It localises to the golgi apparatus membrane. The protein localises to the cytoplasmic vesicle membrane. Its subcellular location is the endoplasmic reticulum membrane. Its function is as follows. Involved in the import of GDP-mannose from the cytoplasm into the Golgi lumen. The sequence is that of GDP-mannose transporter (vrg-4) from Neurospora crassa (strain ATCC 24698 / 74-OR23-1A / CBS 708.71 / DSM 1257 / FGSC 987).